Here is a 397-residue protein sequence, read N- to C-terminus: Purine ribonucleoside efflux pump NepI (397 aa).

Topologically, residues 1–21 are cytoplasmic; sequence MNENIAEKFRADGVARPNWSA. A helical membrane pass occupies residues 22–42; the sequence is VFAVAFCVACLITVEFLPVSL. The Periplasmic portion of the chain corresponds to 43–54; that stretch reads LTPMAQDLGISE. The helical transmembrane segment at 55–75 threads the bilayer; the sequence is GIAGQSVTVTAFVAMFSSLFI. The Cytoplasmic segment spans residues 76-85; that stretch reads TQIIQATDRR. The helical transmembrane segment at 86–106 threads the bilayer; it reads YIVILFAVLLTASCLMVSFAN. Residue serine 107 is a topological domain, periplasmic. A helical transmembrane segment spans residues 108–128; sequence FTLLLLGRACLGLALGGFWAM. Topologically, residues 129–147 are cytoplasmic; that stretch reads SASLTMRLVPARTVPKALS. A helical transmembrane segment spans residues 148-168; the sequence is VIFGAVSIALVIAAPLGSFLG. Residues 169–175 are Periplasmic-facing; sequence GIIGWRN. Residues 176–196 traverse the membrane as a helical segment; sequence VFNAAAVMGVLCVIWVVKSLP. Topologically, residues 197–215 are cytoplasmic; that stretch reads SLPGEPSHQKQNMFSLLQR. A helical membrane pass occupies residues 216–236; the sequence is PGVMAGMIAIFMSFAGQFAFF. Over 237-255 the chain is Periplasmic; the sequence is TYIRPVYMNLAGFDVDGLT. The chain crosses the membrane as a helical span at residues 256 to 276; the sequence is LVLLSFGIASFVGTSFSSYVL. The Cytoplasmic segment spans residues 277–281; sequence KRSVK. A helical transmembrane segment spans residues 282 to 302; the sequence is LALAGAPLLLALSALTLIVWG. The Periplasmic portion of the chain corresponds to 303–305; that stretch reads SDK. The helical transmembrane segment at 306-326 threads the bilayer; that stretch reads TVAAVIAIIWGLAFALVPVGW. At 327-343 the chain is on the cytoplasmic side; sequence STWITRSLADQAEKAGS. The chain crosses the membrane as a helical span at residues 344-364; that stretch reads IQVAVIQLANTCGAAVGGYAL. Residues 365-366 are Periplasmic-facing; the sequence is DN. A helical membrane pass occupies residues 367–387; it reads FGLLSPLALSGCLMLLTALVV. Residues 388–397 lie on the Cytoplasmic side of the membrane; that stretch reads AAKVRITPMS.

Belongs to the major facilitator superfamily. DHA1 family. NepI (TC 2.A.1.2.26) subfamily.

It is found in the cell inner membrane. The catalysed reaction is inosine(in) + H(+)(out) = inosine(out) + H(+)(in). It catalyses the reaction guanosine(in) + H(+)(out) = guanosine(out) + H(+)(in). Functionally, involved in the efflux of purine ribonucleosides, such as inosine and guanosine. This chain is Purine ribonucleoside efflux pump NepI, found in Salmonella enteritidis PT4 (strain P125109).